The primary structure comprises 1437 residues: DNA polymerase III PolC-type (1437 aa).

Residues 420-576 (YVIFDVETTG…YDSETTGHLC (157 aa)) enclose the Exonuclease domain.

This sequence belongs to the DNA polymerase type-C family. PolC subfamily.

It localises to the cytoplasm. The catalysed reaction is DNA(n) + a 2'-deoxyribonucleoside 5'-triphosphate = DNA(n+1) + diphosphate. In terms of biological role, required for replicative DNA synthesis. This DNA polymerase also exhibits 3' to 5' exonuclease activity. The polypeptide is DNA polymerase III PolC-type (Pediococcus pentosaceus (strain ATCC 25745 / CCUG 21536 / LMG 10740 / 183-1w)).